Consider the following 1793-residue polypeptide: Transposon Ty1-H Gag-Pol polyprotein (1793 aa).

3 stretches are compositionally biased toward polar residues: residues 1–10 (MESQQLSNYP), 48–60 (TKAN…TPAS), and 127–152 (QSQF…GNTF). 3 disordered regions span residues 1 to 84 (MESQ…QNGP), 126 to 174 (PQSQ…PPPM), and 390 to 459 (GSRN…SKST). The span at 153–165 (TDSSSADSDMTST) shows a compositional bias: low complexity. The segment at 337–439 (NNGIHINNKV…NSKSKTARAH (103 aa)) is RNA-binding. The segment covering 440 to 456 (NVSTSNNSPSTDNDSIS) has biased composition (low complexity). D499 (for protease activity; shared with dimeric partner) is an active-site residue. Positions 621 to 678 (NVHTSESTRKYPYPFIHRMLAHANAQTIRYSLKNNTITYFNESDVDWSSAIDYQCPDC) are integrase-type zinc finger-like. The Integrase catalytic domain maps to 698–873 (NSYEPFQYLH…AGLDISTLLP (176 aa)). Mg(2+)-binding residues include D709 and D774. The segment at 996–1208 (AVSPTDSTPP…SSLGGIGDSN (213 aa)) is disordered. The segment covering 998–1007 (SPTDSTPPST) has biased composition (low complexity). Polar residues predominate over residues 1043–1053 (STPQISDIEST). The segment covering 1076–1091 (ESSHASKSKDFRHSDS) has biased composition (basic and acidic residues). Composition is skewed to polar residues over residues 1092–1120 (YSDN…QTSE) and 1133–1144 (SIDTSSSESNSL). The Bipartite nuclear localization signal signature appears at 1216 to 1250 (KKRSLEDNETEIKVSRDTWNTKNMRSLEPPRSKKR). Residues 1376–1514 (NNYYITQLDI…DILGLEIKYQ (139 aa)) enclose the Reverse transcriptase Ty1/copia-type domain. Residues D1384, D1465, D1466, D1648, E1690, and D1723 each coordinate Mg(2+). Residues 1648–1790 (DASYGNQPYY…IKTFKLLTNK (143 aa)) form the RNase H Ty1/copia-type domain.

In terms of assembly, the capsid protein forms a homotrimer, from which the VLPs are assembled. The protease is a homodimer, whose active site consists of two apposed aspartic acid residues. Initially, virus-like particles (VLPs) are composed of the structural unprocessed proteins Gag and Gag-Pol, and also contain the host initiator methionine tRNA (tRNA(i)-Met) which serves as a primer for minus-strand DNA synthesis, and a dimer of genomic Ty RNA. Processing of the polyproteins occurs within the particle and proceeds by an ordered pathway, called maturation. First, the protease (PR) is released by autocatalytic cleavage of the Gag-Pol polyprotein yielding capsid protein p45 and a Pol-p154 precursor protein. This cleavage is a prerequisite for subsequent processing of Pol-p154 at the remaining sites to release the mature structural and catalytic proteins. Maturation takes place prior to the RT reaction and is required to produce transposition-competent VLPs.

Its subcellular location is the cytoplasm. The protein resides in the nucleus. The enzyme catalyses DNA(n) + a 2'-deoxyribonucleoside 5'-triphosphate = DNA(n+1) + diphosphate. The catalysed reaction is Endonucleolytic cleavage to 5'-phosphomonoester.. In terms of biological role, capsid protein (CA) is the structural component of the virus-like particle (VLP), forming the shell that encapsulates the retrotransposons dimeric RNA genome. The particles are assembled from trimer-clustered units and there are holes in the capsid shells that allow for the diffusion of macromolecules. CA also has nucleocapsid-like chaperone activity, promoting primer tRNA(i)-Met annealing to the multipartite primer-binding site (PBS), dimerization of Ty1 RNA and initiation of reverse transcription. Its function is as follows. The aspartyl protease (PR) mediates the proteolytic cleavages of the Gag and Gag-Pol polyproteins after assembly of the VLP. Functionally, reverse transcriptase/ribonuclease H (RT) is a multifunctional enzyme that catalyzes the conversion of the retro-elements RNA genome into dsDNA within the VLP. The enzyme displays a DNA polymerase activity that can copy either DNA or RNA templates, and a ribonuclease H (RNase H) activity that cleaves the RNA strand of RNA-DNA heteroduplexes during plus-strand synthesis and hydrolyzes RNA primers. The conversion leads to a linear dsDNA copy of the retrotransposon that includes long terminal repeats (LTRs) at both ends. Integrase (IN) targets the VLP to the nucleus, where a subparticle preintegration complex (PIC) containing at least integrase and the newly synthesized dsDNA copy of the retrotransposon must transit the nuclear membrane. Once in the nucleus, integrase performs the integration of the dsDNA into the host genome. The polypeptide is Transposon Ty1-H Gag-Pol polyprotein (TY1B-H) (Saccharomyces cerevisiae (strain ATCC 204508 / S288c) (Baker's yeast)).